The chain runs to 126 residues: uncharacterized protein (126 aa).

The tract at residues 83–126 (VPPPLDRSHESPEEFFPPQNRNRGGGPKAQIQRHPPEALEKTTH) is disordered. Basic and acidic residues predominate over residues 116–126 (HPPEALEKTTH).

This is an uncharacterized protein from Galliformes (FAdV-1).